The sequence spans 273 residues: Hemin import ATP-binding protein HmuV (273 aa).

The 255-residue stretch at 2–256 (LTAHHLDVAR…AHIAQCYGFA (255 aa)) folds into the ABC transporter domain. ATP is bound at residue 34 to 41 (GRNGAGKS).

Belongs to the ABC transporter superfamily. Heme (hemin) importer (TC 3.A.1.14.5) family. As to quaternary structure, the complex is composed of two ATP-binding proteins (HmuV), two transmembrane proteins (HmuU) and a solute-binding protein (HmuT).

It is found in the cell inner membrane. Its function is as follows. Part of the ABC transporter complex HmuTUV involved in hemin import. Responsible for energy coupling to the transport system. This chain is Hemin import ATP-binding protein HmuV, found in Burkholderia ambifaria (strain ATCC BAA-244 / DSM 16087 / CCUG 44356 / LMG 19182 / AMMD) (Burkholderia cepacia (strain AMMD)).